The primary structure comprises 150 residues: MPELFAYTDGACSGNPGPGGWGVLLQAKEGDRLVKERALKGGEAHTTNNRMELLAAINALESLSRASTITVVTDSNYVKNGITGWIHGWKRNGWKNAAKKPVANAELWQRLDEANARHDVTWKWVKGHAGHAENERADELARAGMAPFKP.

Residues methionine 1–alanine 146 enclose the RNase H type-1 domain. Mg(2+)-binding residues include aspartate 9, glutamate 52, aspartate 74, and aspartate 138.

Belongs to the RNase H family. As to quaternary structure, monomer. Requires Mg(2+) as cofactor.

The protein localises to the cytoplasm. It carries out the reaction Endonucleolytic cleavage to 5'-phosphomonoester.. Endonuclease that specifically degrades the RNA of RNA-DNA hybrids. The polypeptide is Ribonuclease H (Roseobacter denitrificans (strain ATCC 33942 / OCh 114) (Erythrobacter sp. (strain OCh 114))).